We begin with the raw amino-acid sequence, 467 residues long: Interleukin-6 receptor subunit alpha (467 aa).

Residues 1 to 19 form the signal peptide; sequence MLAVGCALLTALLAAPGMA. In terms of domain architecture, Ig-like C2-type spans 20 to 112; the sequence is LAPRGCSKLE…AGSVRLLVDA (93 aa). Residues 20–365 are Extracellular-facing; the sequence is LAPRGCSKLE…VQDSASVPLP (346 aa). 4 disulfides stabilise this stretch: Cys25-Cys193, Cys47-Cys96, Cys121-Cys132, and Cys165-Cys176. N-linked (GlcNAc...) asparagine glycans are attached at residues Asn55 and Asn93. 2 Fibronectin type-III domains span residues 113–217 and 218–316; these read PPEE…LQPD and PPVN…IPWT. N-linked (GlcNAc...) asparagine glycans are attached at residues Asn221 and Asn245. The WSXWS motif motif lies at 303–307; it reads WSEWS. A disordered region spans residues 315–357; sequence WTESRSSPAETELPLSTQAPTTNEDDEDISSKESANATSLPVQ. Composition is skewed to polar residues over residues 317–336 and 346–357; these read ESRS…APTT and KESANATSLPVQ. N-linked (GlcNAc...) asparagine glycosylation occurs at Asn350. Thr352 carries an O-linked (GlcNAc) threonine glycan. A helical transmembrane segment spans residues 366–386; sequence TFLVAGGSLAFGTLLCIGIIL. Residues 387-467 lie on the Cytoplasmic side of the membrane; sequence RFKKTGQLQA…VSNRDYFFPR (81 aa). The tract at residues 428–467 is disordered; it reads ISPPVSPNSLGDNTSRNSRPEARGPQSPYDVSNRDYFFPR.

This sequence belongs to the type I cytokine receptor family. Type 3 subfamily. As to quaternary structure, component of a hexamer of two molecules each of IL6, IL6R and IL6ST; first binds to IL6 to associate with the signaling subunit IL6ST. Interacts (via N-terminal ectodomain) with SORL1; this interaction may affect IL6-binding to IL6R, hence decrease IL6 'classic-signaling'. In terms of assembly, also interacts with SORL1; this interaction leads to soluble IL6R internalization. May form a trimeric complex with the soluble SORL1 ectodomain and circulating IL6 receptor; this interaction might stabilize circulating IL6, hence promote IL6 'trans-signaling'. A short soluble form is also released from the membrane by proteolysis. The sIL6R is formed by limited proteolysis of membrane-bound receptors, a process referred to as ectodomain shedding. mIL6R is cleaved by the proteases ADAM10 and ADAM17. Post-translationally, glycosylated. Glycosylation is dispensable for transport, signaling, and cell-surface turnover. Glycosylation at Asn-55 is a protease-regulatory exosite. Glycosylation is required for ADAM17-mediated proteolysis. Expressed in liver.

The protein resides in the cell membrane. Its subcellular location is the secreted. With respect to regulation, classic and trans-signaling are both inhibited by tocilizumab, a humanized monoclonal antibody that blocks interleukin IL6R signaling. Its function is as follows. Part of the receptor for interleukin 6. Binds to IL6 with low affinity, but does not transduce a signal. Signal activation necessitate an association with IL6ST. Activation leads to the regulation of the immune response, acute-phase reactions and hematopoiesis. The interaction with membrane-bound IL6R and IL6ST stimulates 'classic signaling', the restricted expression of the IL6R limits classic IL6 signaling to only a few tissues such as the liver and some cells of the immune system. Whereas the binding of IL6 and soluble IL6R to IL6ST stimulates 'trans-signaling'. Alternatively, 'cluster signaling' occurs when membrane-bound IL6:IL6R complexes on transmitter cells activate IL6ST receptors on neighboring receiver cells. In terms of biological role, signaling via the membrane-bound IL6R is mostly regenerative and anti-inflammatory. Drives naive CD4(+) T cells to the Th17 lineage, through 'cluster signaling' by dendritic cells. Soluble form of IL6 receptor (sIL6R) that acts as an agonist of IL6 activity. The IL6:sIL6R complex (hyper-IL6) binds to IL6ST/gp130 on cell surfaces and induces signaling also on cells that do not express membrane-bound IL6R in a process called IL6 'trans-signaling'. sIL6R is causative for the pro-inflammatory properties of IL6 and an important player in the development of chronic inflammatory diseases. In complex with IL6, is required for induction of VEGF production. Plays a protective role during liver injury, being required for maintenance of tissue regeneration. 'Trans-signaling' in central nervous system regulates energy and glucose homeostasis. The protein is Interleukin-6 receptor subunit alpha (IL6R) of Sus scrofa (Pig).